Consider the following 611-residue polypeptide: MPPYRSRTTTHGRNMAGARGLWRATGMKDEDFGKPIIAVVNSFTQFVPGHVHLKDLGQLVAREIESAGGVAKEFNTIAVDDGIAMGHDGMLYSLPSRELIADSVEYMVNAHCADAMVCISNCDKITPGMLMAALRLNIPVVFVSGGPMEAGKVVWEDSVKKLDLVDAMVAAADDHYTDEQVKAIERSACPTCGSCSGMFTANSMNCLTEALGLSLPGNGSTLATHADRKRLFVEAGHLIVDLARRYYEQDDESVLPRSIATFSAFENAMTLDIAMGGSTNTVLHLLAAAQEAEIDFTMADIDRLSRRVPVLCKVAPAVSSVHMEDVHHAGGIMGILGQLDNAGLLTTSIPTVHSETLAKALDHWDVTRTNSEMVHKFYSAAPGGVPTQVAFSQERRFDKVDTDREKGVIRSKEHAFSQDGGLAVLYGNLAEDGCIVKTAGVDDSILKFSGPARIFESQDSAVLGILNGKIKPGDIVLIRYEGPRGGPGMQEMLYPTSYLKSKGLGKACALITDGRFSGGSSGLSIGHVSPEAAEGGTIGLVREGDIIDIDIPNRKIHLAVDDATLAERRAEQDAAGWKPAEERKRKISTALKAYAAMATSAARGAVRKLPD.

Asp-81 provides a ligand contact to Mg(2+). Residue Cys-122 participates in [2Fe-2S] cluster binding. Asp-123 and Lys-124 together coordinate Mg(2+). Residue Lys-124 is modified to N6-carboxylysine. Cys-195 is a [2Fe-2S] cluster binding site. Glu-491 is a Mg(2+) binding site. The active-site Proton acceptor is Ser-517.

The protein belongs to the IlvD/Edd family. In terms of assembly, homodimer. Requires [2Fe-2S] cluster as cofactor. Mg(2+) serves as cofactor.

It catalyses the reaction (2R)-2,3-dihydroxy-3-methylbutanoate = 3-methyl-2-oxobutanoate + H2O. The catalysed reaction is (2R,3R)-2,3-dihydroxy-3-methylpentanoate = (S)-3-methyl-2-oxopentanoate + H2O. It participates in amino-acid biosynthesis; L-isoleucine biosynthesis; L-isoleucine from 2-oxobutanoate: step 3/4. Its pathway is amino-acid biosynthesis; L-valine biosynthesis; L-valine from pyruvate: step 3/4. Functionally, functions in the biosynthesis of branched-chain amino acids. Catalyzes the dehydration of (2R,3R)-2,3-dihydroxy-3-methylpentanoate (2,3-dihydroxy-3-methylvalerate) into 2-oxo-3-methylpentanoate (2-oxo-3-methylvalerate) and of (2R)-2,3-dihydroxy-3-methylbutanoate (2,3-dihydroxyisovalerate) into 2-oxo-3-methylbutanoate (2-oxoisovalerate), the penultimate precursor to L-isoleucine and L-valine, respectively. This is Dihydroxy-acid dehydratase from Brucella abortus (strain S19).